A 66-amino-acid chain; its full sequence is UPF0434 protein RPC_0266 (66 aa).

The protein belongs to the UPF0434 family.

This is UPF0434 protein RPC_0266 from Rhodopseudomonas palustris (strain BisB18).